The primary structure comprises 147 residues: Sec-independent protein translocase protein TatB (147 aa).

The helical transmembrane segment at 1 to 21 (MFDISFSEILVIAAVALIVIG) threads the bilayer. Residues 67-88 (EETGRSIENSVHTELDKFRETV) are compositionally biased toward basic and acidic residues. A disordered region spans residues 67–147 (EETGRSIENS…GVNRERETAE (81 aa)). Positions 103 to 117 (APAGESSPPQNSSPA) are enriched in low complexity.

It belongs to the TatB family. The Tat system comprises two distinct complexes: a TatABC complex, containing multiple copies of TatA, TatB and TatC subunits, and a separate TatA complex, containing only TatA subunits. Substrates initially bind to the TatABC complex, which probably triggers association of the separate TatA complex to form the active translocon.

Its subcellular location is the cell inner membrane. Functionally, part of the twin-arginine translocation (Tat) system that transports large folded proteins containing a characteristic twin-arginine motif in their signal peptide across membranes. Together with TatC, TatB is part of a receptor directly interacting with Tat signal peptides. TatB may form an oligomeric binding site that transiently accommodates folded Tat precursor proteins before their translocation. This is Sec-independent protein translocase protein TatB from Nitrosospira multiformis (strain ATCC 25196 / NCIMB 11849 / C 71).